A 139-amino-acid chain; its full sequence is Nucleoside diphosphate kinase (139 aa).

ATP contacts are provided by Lys11, Phe59, Arg87, Thr93, Arg104, and Asn114. His117 functions as the Pros-phosphohistidine intermediate in the catalytic mechanism.

It belongs to the NDK family. As to quaternary structure, homotetramer. Mg(2+) is required as a cofactor.

It localises to the cytoplasm. The catalysed reaction is a 2'-deoxyribonucleoside 5'-diphosphate + ATP = a 2'-deoxyribonucleoside 5'-triphosphate + ADP. It carries out the reaction a ribonucleoside 5'-diphosphate + ATP = a ribonucleoside 5'-triphosphate + ADP. Its function is as follows. Major role in the synthesis of nucleoside triphosphates other than ATP. The ATP gamma phosphate is transferred to the NDP beta phosphate via a ping-pong mechanism, using a phosphorylated active-site intermediate. The chain is Nucleoside diphosphate kinase from Wolbachia pipientis wMel.